A 233-amino-acid polypeptide reads, in one-letter code: Small ribosomal subunit protein uS3 (233 aa).

The KH type-2 domain maps to 39-107 (VREFLKAKLK…PVHVNIEEVR (69 aa)). The interval 209-233 (PGQVSAEPTQPEKKMRKGGRNAAAN) is disordered.

It belongs to the universal ribosomal protein uS3 family. Part of the 30S ribosomal subunit. Forms a tight complex with proteins S10 and S14.

In terms of biological role, binds the lower part of the 30S subunit head. Binds mRNA in the 70S ribosome, positioning it for translation. The polypeptide is Small ribosomal subunit protein uS3 (Laribacter hongkongensis (strain HLHK9)).